The sequence spans 2664 residues: Non-reducing polyketide synthase sorB (2664 aa).

Residues 21–45 (KSAPQSGNTADDIPNAASQPDTTST) form a disordered region. A compositionally biased stretch (polar residues) spans 36–45 (AASQPDTTST). The interval 112-281 (ADHARRLAEW…TTPSRIASDL (170 aa)) is N-terminal acylcarrier protein transacylase domain (SAT). Catalysis depends on Cys-184, which acts as the Nucleophile; for transacylase activity. His-302 (proton donor/acceptor; for transacylase activity) is an active-site residue. The Ketosynthase family 3 (KS3) domain occupies 428 to 849 (DNDIAVIGMS…GSNASMVIKQ (422 aa)). Residues Cys-596, His-731, and His-772 each act as for beta-ketoacyl synthase activity in the active site. The interval 961-1276 (CFGGQVSKSV…TQGTRQLADV (316 aa)) is malonyl-CoA:ACP transacylase (MAT) domain. The N-terminal hotdog fold stretch occupies residues 1345-1477 (PGLYTFMGYG…GQLEFHRADD (133 aa)). The 319-residue stretch at 1345–1663 (PGLYTFMGYG…FSARSMSELF (319 aa)) folds into the PKS/mFAS DH domain. The interval 1376-1548 (VSGYTLGKTV…PSESAGRAVK (173 aa)) is product template (PT) domain. A C-terminal hotdog fold region spans residues 1507–1663 (DEVIQGQSIY…FSARSMSELF (157 aa)). The Carrier domain occupies 1711–1785 (TELWAKLLPV…GILAFLQSTL (75 aa)). O-(pantetheine 4'-phosphoryl)serine is present on Ser-1745. The segment at 1789–1820 (GEDDASQSSDAASSSRNTPPSSNDGILATPSP) is disordered. Positions 1794-1803 (SQSSDAASSS) are enriched in low complexity. The tract at residues 2015 to 2197 (FQLMADFLSR…DAGYKHVEWT (183 aa)) is methyltransferase domain. Residues 2281 to 2526 (VTGTTGSLGS…TLRSFPAVEG (246 aa)) form an NADPH-binding (R) domain region.

Pantetheine 4'-phosphate is required as a cofactor.

Its pathway is secondary metabolite biosynthesis. In terms of biological role, non-reducing polyketide synthase; part of the gene cluster that mediates the biosynthesis of sorbicillinoids, a diverse group of yellow secondary metabolites that restrict growth of competing pathogenic fungi but not of bacteria. Sorbicillinoids biosynthesis requires the action of two PKSs. SorA iteratively combines three acetyl units and the growing chain is modified by the ketoacyl reductase subunit, and optional by the enoyl reductase subunit in the second cycle. The polyketide is then handed over to the PKS SorB, which adds three more acetyl units, and two methyl groups. SorB releases an aldehyde, which undergoes spontaneous cyclization resulting in the formation of sorbicillin or 2',3'-dihydrosorbicillin. The monooxygenase sorC oxidizes sorbicillin and 2',3'-dihydrosorbicillin to 2',3'-dihydrosorbicillinol and sorbicillinol, respectively. The oxidoreductase sorD further converts sorbicillinol into oxosorbicillinol. Sorbicillinol is the building block for the other sorbicillinoids such as disorbicillinol, bisvertinolon, and dihydrobisvertinolone. This chain is Non-reducing polyketide synthase sorB, found in Penicillium rubens (strain ATCC 28089 / DSM 1075 / NRRL 1951 / Wisconsin 54-1255) (Penicillium chrysogenum).